The primary structure comprises 103 residues: uncharacterized protein (103 aa).

Residues 38 to 58 (FTTLITIYVAAFYTGVIGAAV) traverse the membrane as a helical segment.

It is found in the membrane. This is an uncharacterized protein from Arabidopsis thaliana (Mouse-ear cress).